Reading from the N-terminus, the 468-residue chain is Citrate synthase, mitochondrial (468 aa).

The transit peptide at 1 to 30 directs the protein to the mitochondrion; it reads MSFLSISRLAPRLLSSKNAACVVVAARNAS. Residues histidine 303 and histidine 349 contribute to the active site. Residue arginine 358 participates in oxaloacetate binding. Residue aspartate 404 is part of the active site. Residues arginine 430 and arginine 450 each coordinate oxaloacetate.

The protein belongs to the citrate synthase family. In terms of assembly, homodimer.

The protein localises to the mitochondrion matrix. The catalysed reaction is oxaloacetate + acetyl-CoA + H2O = citrate + CoA + H(+). Its pathway is carbohydrate metabolism; tricarboxylic acid cycle; isocitrate from oxaloacetate: step 1/2. Functionally, key enzyme of the Krebs tricarboxylic acid cycle which catalyzes the synthesis of citrate from acetyl coenzyme A and oxaloacetate. In Danio rerio (Zebrafish), this protein is Citrate synthase, mitochondrial (cs).